A 289-amino-acid chain; its full sequence is Ribosomal RNA small subunit methyltransferase A (289 aa).

Asn21, Leu23, Gly48, Glu69, Asp94, and Asn120 together coordinate S-adenosyl-L-methionine.

This sequence belongs to the class I-like SAM-binding methyltransferase superfamily. rRNA adenine N(6)-methyltransferase family. RsmA subfamily.

It localises to the cytoplasm. The enzyme catalyses adenosine(1518)/adenosine(1519) in 16S rRNA + 4 S-adenosyl-L-methionine = N(6)-dimethyladenosine(1518)/N(6)-dimethyladenosine(1519) in 16S rRNA + 4 S-adenosyl-L-homocysteine + 4 H(+). In terms of biological role, specifically dimethylates two adjacent adenosines (A1518 and A1519) in the loop of a conserved hairpin near the 3'-end of 16S rRNA in the 30S particle. May play a critical role in biogenesis of 30S subunits. The chain is Ribosomal RNA small subunit methyltransferase A from Actinobacillus pleuropneumoniae serotype 7 (strain AP76).